A 99-amino-acid polypeptide reads, in one-letter code: Aspartyl/glutamyl-tRNA(Asn/Gln) amidotransferase subunit C (99 aa).

This sequence belongs to the GatC family. Heterotrimer of A, B and C subunits.

The enzyme catalyses L-glutamyl-tRNA(Gln) + L-glutamine + ATP + H2O = L-glutaminyl-tRNA(Gln) + L-glutamate + ADP + phosphate + H(+). It carries out the reaction L-aspartyl-tRNA(Asn) + L-glutamine + ATP + H2O = L-asparaginyl-tRNA(Asn) + L-glutamate + ADP + phosphate + 2 H(+). Functionally, allows the formation of correctly charged Asn-tRNA(Asn) or Gln-tRNA(Gln) through the transamidation of misacylated Asp-tRNA(Asn) or Glu-tRNA(Gln) in organisms which lack either or both of asparaginyl-tRNA or glutaminyl-tRNA synthetases. The reaction takes place in the presence of glutamine and ATP through an activated phospho-Asp-tRNA(Asn) or phospho-Glu-tRNA(Gln). This chain is Aspartyl/glutamyl-tRNA(Asn/Gln) amidotransferase subunit C, found in Burkholderia thailandensis (strain ATCC 700388 / DSM 13276 / CCUG 48851 / CIP 106301 / E264).